The sequence spans 403 residues: Peroxisomal membrane protein PEX13 (403 aa).

The segment covering 1–11 (MASQPPPPPKP) has biased composition (pro residues). Positions 1-69 (MASQPPPPPK…SQQTGGNNVN (69 aa)) are disordered. The Peroxisomal matrix portion of the chain corresponds to 1-134 (MASQPPPPPK…SSRGAFQSIE (134 aa)). Residues 59 to 69 (PSQQTGGNNVN) show a composition bias toward polar residues. The chain crosses the membrane as a helical span at residues 135 to 155 (SIVHAFASVSMMMDATFSAVY). The tract at residues 145-233 (MMMDATFSAV…EDQANNSAKS (89 aa)) is targeting to peroxisomes. The Cytoplasmic segment spans residues 156–174 (NSFRAVLDVANHFSRLKIH). The chain crosses the membrane as a helical span at residues 175–192 (FTKVFSAFALVRTIRYLY). Residues 175 to 196 (FTKVFSAFALVRTIRYLYRRLQ) form an interaction with PEX19 region. The Peroxisomal matrix segment spans residues 193–233 (RRLQWMMGLRRGSENEDLWAESEGTVACLGAEDQANNSAKS). Residues 234–254 (WPIFLFFAVILGGPYLIWKLL) form a helical membrane-spanning segment. Topologically, residues 255-403 (STHSDEVTDS…TGKNGDKQDL (149 aa)) are cytoplasmic. The SH3 domain occupies 272–336 (DDHVVARAEY…PANYVKILGK (65 aa)). Disordered stretches follow at residues 341 to 364 (KTVESSTMPKQQQSFTNPTSVKGV) and 381 to 403 (FVETNKVAGTPDSTGKNGDKQDL). Residues 344–364 (ESSTMPKQQQSFTNPTSVKGV) are compositionally biased toward polar residues.

This sequence belongs to the peroxin-13 family. As to quaternary structure, interacts (via SH3 domain) with PEX14 (via SH3-binding motif); forming the PEX13-PEX14 docking complex. Interacts with PEX19.

It localises to the peroxisome membrane. Its function is as follows. Component of the PEX13-PEX14 docking complex, a translocon channel that specifically mediates the import of peroxisomal cargo proteins bound to PEX5 receptor. The PEX13-PEX14 docking complex forms a large import pore which can be opened to a diameter of about 9 nm. Mechanistically, PEX5 receptor along with cargo proteins associates with the PEX14 subunit of the PEX13-PEX14 docking complex in the cytosol, leading to the insertion of the receptor into the organelle membrane with the concomitant translocation of the cargo into the peroxisome matrix. Involved in the import of PTS1- and PTS2-type containing proteins. This is Peroxisomal membrane protein PEX13 from Rattus norvegicus (Rat).